We begin with the raw amino-acid sequence, 497 residues long: POU domain, class 3, transcription factor 3 (497 aa).

The span at 31-51 shows a compositional bias: gly residues; it reads GGGGGGGGGGGGAGGGGGGMQ. Disordered regions lie at residues 31 to 62, 121 to 189, 230 to 316, and 458 to 497; these read GGGG…SGAY, WSGS…WGAA, NGML…TPTS, and EKRM…TSVQ. Composition is skewed to pro residues over residues 133-145 and 170-180; these read QQPP…PPQG and HLGPPPPPPHQ. Positions 240 to 250 are enriched in gly residues; the sequence is GGGGGGAGGGA. A compositionally biased stretch (basic residues) spans 269–286; sequence HHHHHHHHAHPHPPHPHH. The region spanning 311–385 is the POU-specific domain; the sequence is EDTPTSDDLE…LLNKWLEEAD (75 aa). Residues 403–462 constitute a DNA-binding region (homeobox); sequence KRKKRTSIEVSVKGALESHFLKCPKPSAQEITNLADSLQLEKEVVRVWFCNRRQKEKRMT. Over residues 465–483 the composition is skewed to polar residues; that stretch reads GIQQQTPDDVYSQVGTVSA.

Belongs to the POU transcription factor family. Class-3 subfamily. As to quaternary structure, homodimer. As to expression, brain.

The protein localises to the nucleus. Its function is as follows. Transcription factor that acts synergistically with SOX11 and SOX4. Plays a role in neuronal development. Is implicated in an enhancer activity at the embryonic met-mesencephalic junction; the enhancer element contains the octamer motif (5'-ATTTGCAT-3'). The polypeptide is POU domain, class 3, transcription factor 3 (Pou3f3) (Rattus norvegicus (Rat)).